The primary structure comprises 371 residues: uncharacterized protein (371 aa).

33 to 40 (GPLNSGKT) is a binding site for ATP.

The protein belongs to the archaeal ATPase family.

This is an uncharacterized protein from Methanocaldococcus jannaschii (strain ATCC 43067 / DSM 2661 / JAL-1 / JCM 10045 / NBRC 100440) (Methanococcus jannaschii).